The primary structure comprises 161 residues: Ribosome maturation factor RimP (161 aa).

The protein belongs to the RimP family.

It is found in the cytoplasm. Its function is as follows. Required for maturation of 30S ribosomal subunits. This is Ribosome maturation factor RimP from Rickettsia rickettsii (strain Iowa).